The following is a 234-amino-acid chain: MQLRAFISVFASLACVNAAVIDHDQVVPFAQPTPTTTLQTLAVQYKPQIYIANGCHPYPAVDEDGNTSGGLKPTGSQSAGCKGSGYGSQIYGRAVAYEGVYAFMYSWYMPKDETLPGLGHRHDWEACVVWLDSLENPNVVALSASYHSTYLTYYPPDSDYLDGNSAKIEYSTSWVILDHLLSATSTSGETQDLIMWDQLTDAARTALEDTDFGDANVPFKDANFETKLANAYYT.

The signal sequence occupies residues 1 to 18 (MQLRAFISVFASLACVNA). N66 is a glycosylation site (N-linked (GlcNAc...) asparagine). A Conserved undecapeptide motif I motif is present at residues 102–112 (AFMYSWYMPKD). The Hepta-peptide GHRHDWE motif II motif lies at 119-125 (GHRHDWE).

It belongs to the Necrosis inducing protein (NPP1) family.

It localises to the secreted. Functionally, secreted effector that contributes to virulence during infection by P.capsici. Induces distinct chlorosis at 3 days after inoculation of host C.annuum leaves, and all the chlorotic areas gradually turn brown and become moderately necrotic at 7 days after inoculation. Leads only to chlorotic areas, without necrosis at 7 days after non-host N.benthamiana leaves infection. Induces cell death in hot pepper. This chain is NLP effector protein 1, found in Phytophthora capsici.